The following is a 360-amino-acid chain: BLOC-1-related complex subunit 6 (360 aa).

The disordered stretch occupies residues 1-201; that stretch reads MEAAQGRLGP…TGAGGGRRAT (201 aa). Residues 23 to 33 show a composition bias toward polar residues; that stretch reads ATFSGRPSRTP. The residue at position 41 (Thr41) is a Phosphothreonine. Residue Ser130 is modified to Phosphoserine. Acidic residues predominate over residues 144 to 155; the sequence is EGDDDDDEDEEA. A Phosphoserine modification is found at Ser173. A compositionally biased stretch (gly residues) spans 179–198; the sequence is GACGGGGSSSSGETGAGGGR. Thr201 bears the Phosphothreonine mark. Ser204 bears the Phosphoserine mark.

Belongs to the BORCS6 family. In terms of assembly, component of the BLOC-one-related complex (BORC) which is composed of BLOC1S1, BLOC1S2, BORCS5, BORCS6, BORCS7, BORCS8, KXD1 and SNAPIN.

The protein localises to the lysosome membrane. Functionally, as part of the BORC complex may play a role in lysosomes movement and localization at the cell periphery. Associated with the cytosolic face of lysosomes, the BORC complex may recruit ARL8B and couple lysosomes to microtubule plus-end-directed kinesin motor. The sequence is that of BLOC-1-related complex subunit 6 from Mus musculus (Mouse).